The sequence spans 86 residues: UPF0367 protein PMN2A_1492 (86 aa).

It belongs to the UPF0367 family.

In Prochlorococcus marinus (strain NATL2A), this protein is UPF0367 protein PMN2A_1492.